A 170-amino-acid chain; its full sequence is MLPNTPRRAVYAGSFDPPTLGHLWMIRQAQSMFDELIVAIGINPDKRSTYTVAERQDMLCDITKMFPNVRTDVFENRFLVHYAREVDAGFIVRGIRSASDYEYERSMRHINSDLAPEISTVFLMPPREIAEVSSTMVKGLVGPEGWTETIHRYVPQAVYEKILAEHQHEN.

Position 14 (serine 14) interacts with substrate. Residues 14 to 15 and histidine 22 contribute to the ATP site; that span reads SF. Substrate contacts are provided by lysine 46, leucine 79, and arginine 93. ATP contacts are provided by residues 94-96, glutamate 104, and 129-135; these read GIR and IAEVSST.

Belongs to the bacterial CoaD family. Homohexamer. It depends on Mg(2+) as a cofactor.

Its subcellular location is the cytoplasm. It carries out the reaction (R)-4'-phosphopantetheine + ATP + H(+) = 3'-dephospho-CoA + diphosphate. Its pathway is cofactor biosynthesis; coenzyme A biosynthesis; CoA from (R)-pantothenate: step 4/5. Reversibly transfers an adenylyl group from ATP to 4'-phosphopantetheine, yielding dephospho-CoA (dPCoA) and pyrophosphate. The polypeptide is Phosphopantetheine adenylyltransferase (Neisseria meningitidis serogroup C (strain 053442)).